The primary structure comprises 883 residues: NF-X1-type zinc finger protein NFXL2 (883 aa).

A compositionally biased stretch (polar residues) spans 1–10 (MTNMAGTATT). Positions 1–44 (MTNMAGTATTEFRWKSPPQPPSQEQPISDSDSDSGSDSENHQHR) are disordered. The RING-type; degenerate zinc-finger motif lies at 87 to 152 (CLICLERIKR…EAVWNCPKCR (66 aa)). 11 NF-X1-type zinc fingers span residues 198-216 (CGHC…SCPK), 250-269 (CNIH…PCRE), 303-322 (CGKH…LCPY), 357-377 (CGYH…TCRI), 410-429 (CARH…PCSE), 437-456 (CRNH…PCPI), 494-515 (CRHG…PCRL), 523-568 (CGHK…RCPE), 605-636 (CGNH…KCDL), 646-664 (CQHP…PCKT), and 709-738 (CTHL…RCKC). The segment at 798 to 824 (EIEEKEEPSGKNASKRRKRRGRGQDIQ) is disordered. The chain crosses the membrane as a helical span at residues 841–863 (MVVMLVAMLAAVSYYGYKGLLWL).

It belongs to the NFX1 family. In terms of assembly, interacts with ADO1/ZTL. In terms of tissue distribution, constitutively expressed in mesophyll and guard cells.

The protein resides in the nucleus. It is found in the membrane. It participates in protein modification; protein ubiquitination. Probable transcriptional regulator. May mediate E2- or E3-dependent ubiquitination. Required to gate light sensitivity during the night. Regulates the speed of the clock by acting in the feedback loop between CCA1, LHY and APRR1/TOC1. Promotes the expression of CCA1 at night but not by days. This activational effect is enhanced by interaction with ADO1/ZTL. Association with ADO1/ZTL is not leading to the degradation of NFXL2. Confers sensitivity to osmotic stress such as high salinity. Prevents H(2)O(2) production and abscisic acid accumulation. Part of a regulatory network that integrates the biosynthesis and action of abscisic acid, reactive oxygen species and cuticle components. This Arabidopsis thaliana (Mouse-ear cress) protein is NF-X1-type zinc finger protein NFXL2 (NFXL2).